The primary structure comprises 241 residues: RxLR effector protein SFI5 (241 aa).

Residues 1 to 20 (MLRQARPLVVLIAVTFLVAS) form the signal peptide. The RxLR-dEER signature appears at 44 to 62 (RLLRTHHATIKVNADSEER).

Belongs to the RxLR effector family.

The protein resides in the secreted. It is found in the host cell membrane. Its function is as follows. Effector that suppresses flg22-induced post-translational MAP kinase activation in tomato but not in Arabidopsis. The perception of highly conserved pathogen- or microbe-associated molecular patterns (PAMPs/MAMPs), such as flg22, triggers converging signaling pathways recruiting MAP kinase cascades and inducing transcriptional re-programming, yielding a generic antimicrobial response. The polypeptide is RxLR effector protein SFI5 (Phytophthora infestans (strain T30-4) (Potato late blight agent)).